The sequence spans 277 residues: Sulfate transport system permease protein CysT (277 aa).

Helical transmembrane passes span 17–37 (LGTS…ALVM), 64–84 (LLSA…MAWI), 99–119 (LMDL…ASLF), 136–156 (VTYT…PFVV), 185–205 (FCKV…ALSF), 215–235 (VIFI…MIFV), and 243–263 (PAAS…LFSI). The region spanning 60 to 263 (YKVTLLSAFV…AASLLLLFSI (204 aa)) is the ABC transmembrane type-1 domain.

This sequence belongs to the binding-protein-dependent transport system permease family. CysTW subfamily. In terms of assembly, the complex is composed of two ATP-binding proteins (CysA), two transmembrane proteins (CysT and CysW) and a solute-binding protein (CysP).

Its subcellular location is the cell inner membrane. Its function is as follows. Part of the ABC transporter complex CysAWTP (TC 3.A.1.6.1) involved in sulfate/thiosulfate import. Probably responsible for the translocation of the substrate across the membrane. This chain is Sulfate transport system permease protein CysT (cysU), found in Escherichia coli (strain K12).